We begin with the raw amino-acid sequence, 349 residues long: Probable G-protein coupled receptor 21 (349 aa).

The Extracellular segment spans residues 1-32 (MNSTLDGNQSSHPFCLLAFGYLETVNFCLLEV). 2 N-linked (GlcNAc...) asparagine glycosylation sites follow: Asn-2 and Asn-8. Residues 33–53 (LIIVFLTVLIISGNIIVIFVF) form a helical membrane-spanning segment. Residues 54-75 (HCAPLLNHHTTSYFIQTMAYAD) are Cytoplasmic-facing. A helical membrane pass occupies residues 76–96 (LFVGVSCVVPSLSLLHHPLPV). The Extracellular segment spans residues 97–104 (EESLTCQI). Residues 105 to 125 (FGFVVSVLKSVSMASLACISI) traverse the membrane as a helical segment. The Cytoplasmic segment spans residues 126 to 147 (DRYIAITKPLTYNTLVTPWRLR). A helical membrane pass occupies residues 148 to 168 (LCIFLIWLYSTLVFLPSFFHW). The Extracellular portion of the chain corresponds to 169 to 191 (GKPGYHGDVFQWCAESWHTDSYF). A helical transmembrane segment spans residues 192 to 212 (TLFIVMMLYAPAALIVCFTYF). Topologically, residues 213–252 (NIFRICQQHTKDISERQARFSSQSGETGEVQACPDKRYAM) are cytoplasmic. The helical transmembrane segment at 253-273 (VLFRITSVFYILWLPYIIYFL) threads the bilayer. Topologically, residues 274–283 (LESSTGHSNR) are extracellular. Residues 284 to 304 (FASFLTTWLAISNSFCNCVIY) traverse the membrane as a helical segment. At 305–349 (SLSNSVFQRGLKRLSGAMCTSCASQTTANDPYTVRSKGPLNGCHI) the chain is on the cytoplasmic side.

Belongs to the G-protein coupled receptor 1 family. As to expression, not detected in the brain regions thalamus, putamen, caudate, frontal cortex, pons, hypothalamus, hippocampus.

It is found in the cell membrane. Functionally, orphan receptor. This Homo sapiens (Human) protein is Probable G-protein coupled receptor 21 (GPR21).